Here is a 295-residue protein sequence, read N- to C-terminus: Proline-rich protein 18 (295 aa).

Residues Met-1–Ala-13 are compositionally biased toward pro residues. The disordered stretch occupies residues Met-1–Ala-133. Over residues Pro-14–Ala-29 the composition is skewed to low complexity. Ser-47 carries the phosphoserine modification. An Omega-N-methylarginine modification is found at Arg-83. Low complexity predominate over residues Ala-103 to Gly-126. Arg-172 carries the asymmetric dimethylarginine modification. Residues Ala-181–Ala-192 show a composition bias toward low complexity. The segment at Ala-181–Arg-227 is disordered. Arg-188 is modified (omega-N-methylarginine).

The sequence is that of Proline-rich protein 18 (PRR18) from Homo sapiens (Human).